Here is a 371-residue protein sequence, read N- to C-terminus: Glycerol-3-phosphate dehydrogenase [NAD(+)] 2 (371 aa).

NAD(+)-binding positions include 18–23, Phe50, and Phe106; that span reads GSGNWG. Lys129 is a binding site for substrate. Ala162 serves as a coordination point for NAD(+). Lys222 acts as the Proton acceptor in catalysis. Arg294 and Gln323 together coordinate NAD(+). 294–295 provides a ligand contact to substrate; the sequence is RN.

This sequence belongs to the NAD-dependent glycerol-3-phosphate dehydrogenase family. As to quaternary structure, interacts with human CFH/complement factor H; the interaction is direct and enables the pathogen to evade the host innate immune system. Interacts with human CFHR1/complement factor H-related protein 1; the interaction is direct. Interacts with human PLG/plasminogen; the interaction is direct and provides active plasmin on the surface of fungal cells.

It is found in the secreted. It localises to the cell wall. Its subcellular location is the cytoplasm. The protein resides in the peroxisome. The catalysed reaction is sn-glycerol 3-phosphate + NAD(+) = dihydroxyacetone phosphate + NADH + H(+). In terms of biological role, may catalyze the production and accumulation of glycerol during hyperosmotic stress conditions. Glycerol acts as a osmoregulator that prevents loss of water and turgor of the cells. Mediates evasion of the host innate immune system by binding inhibitory components of the host alternative complement system, in a manner dependent on estrogen-induced inhibition of EBP1. This Candida albicans (strain SC5314 / ATCC MYA-2876) (Yeast) protein is Glycerol-3-phosphate dehydrogenase [NAD(+)] 2.